The following is a 150-amino-acid chain: Large ribosomal subunit protein bL17 (150 aa).

The interval 126–150 is disordered; sequence DRAKRREERLKAQREGRDHEEETDE.

Belongs to the bacterial ribosomal protein bL17 family. In terms of assembly, part of the 50S ribosomal subunit. Contacts protein L32.

The chain is Large ribosomal subunit protein bL17 from Solibacter usitatus (strain Ellin6076).